We begin with the raw amino-acid sequence, 180 residues long: ATP synthase subunit delta (180 aa).

This sequence belongs to the ATPase delta chain family. In terms of assembly, F-type ATPases have 2 components, F(1) - the catalytic core - and F(0) - the membrane proton channel. F(1) has five subunits: alpha(3), beta(3), gamma(1), delta(1), epsilon(1). F(0) has three main subunits: a(1), b(2) and c(10-14). The alpha and beta chains form an alternating ring which encloses part of the gamma chain. F(1) is attached to F(0) by a central stalk formed by the gamma and epsilon chains, while a peripheral stalk is formed by the delta and b chains.

It is found in the cell membrane. F(1)F(0) ATP synthase produces ATP from ADP in the presence of a proton or sodium gradient. F-type ATPases consist of two structural domains, F(1) containing the extramembraneous catalytic core and F(0) containing the membrane proton channel, linked together by a central stalk and a peripheral stalk. During catalysis, ATP synthesis in the catalytic domain of F(1) is coupled via a rotary mechanism of the central stalk subunits to proton translocation. Functionally, this protein is part of the stalk that links CF(0) to CF(1). It either transmits conformational changes from CF(0) to CF(1) or is implicated in proton conduction. The polypeptide is ATP synthase subunit delta (Bacillus cereus (strain 03BB102)).